Consider the following 995-residue polypeptide: Endo-beta-N-acetylglucosaminidase EndoS (995 aa).

An N-terminal signal peptide occupies residues 1 to 36 (MDKHLLVKRTLGCVCAATLMGAALATHHDSLNTVKA). The GH18 domain occupies 112–432 (SLYGGYFRTW…KDATDNIFHS (321 aa)). A glycoprotein contacts are provided by His151, Trp153, and Arg186. The active-site Proton donor is Glu235. A glycoprotein contacts are provided by Asp237, Gln303, Tyr305, Glu349, Glu350, Asn356, and Tyr402. LRR repeat units follow at residues 437–460 (SKAL…DFPD), 478–503 (LERF…KFKK), 562–585 (LTGL…DAAT), and 586–609 (LTSL…ENRQ). The segment at 765 to 923 (MVNLAEGATV…VPELQILGYP (159 aa)) is carbohydrate-binding module (CBM). Ca(2+)-binding residues include Lys786, Asp789, Gln791, Pro915, and Glu916. Residues 924-995 (LPNADTIMKT…CIEKRQLLKK (72 aa)) form a three-helix bundle (3H) region.

It belongs to the glycosyl hydrolase 18 family. Cleaved by SpeB protease; leading to loss of endoglucosidase activity. EndoS is produced and secreted prior to SpeB, suggesting that it is degraded after acting as a host immune evasion factor.

Its subcellular location is the secreted. It is found in the host extracellular space. It carries out the reaction an N(4)-(oligosaccharide-(1-&gt;3)-[oligosaccharide-(1-&gt;6)]-beta-D-Man-(1-&gt;4)-beta-D-GlcNAc-(1-&gt;4)-alpha-D-GlcNAc)-L-asparaginyl-[protein] + H2O = an oligosaccharide-(1-&gt;3)-[oligosaccharide-(1-&gt;6)]-beta-D-Man-(1-&gt;4)-D-GlcNAc + N(4)-(N-acetyl-beta-D-glucosaminyl)-L-asparaginyl-[protein]. Functionally, endoglucosidase that acts as a host immune evasion factor by mediating hydrolysis of the N-linked glycan from the Fc region of host immunoglobulin-gamma (IgG) during infection. Specifically catalyzes the hydrolysis of the beta-1,4 linkage between the first two N-acetylglucosamine residues of the complex-type N-linked glycan located on 'Asn-297' of the Fc region of IgG antibodies (IGHG1, IGHG2, IGHG3 or IGHG4), thereby preventing interaction between IgGs and Fc receptors and ability to activate the complement pathway. Shows a specificity for biantennary complex type N-glycans; does neither cleave larger complex type glycans nor oligomannose and nor hybrid-type glycans. Specifically acts on IgGs; does not act on immunoglobulin alpha, beta, delta or mu. This Streptococcus pyogenes serotype M1 protein is Endo-beta-N-acetylglucosaminidase EndoS.